A 304-amino-acid chain; its full sequence is Aspartate carbamoyltransferase catalytic subunit (304 aa).

Positions 49 and 50 each coordinate carbamoyl phosphate. Lys77 provides a ligand contact to L-aspartate. Arg99, His127, and Gln130 together coordinate carbamoyl phosphate. Arg160 and Arg211 together coordinate L-aspartate. Ala252 and Pro253 together coordinate carbamoyl phosphate.

Belongs to the aspartate/ornithine carbamoyltransferase superfamily. ATCase family. In terms of assembly, heterododecamer (2C3:3R2) of six catalytic PyrB chains organized as two trimers (C3), and six regulatory PyrI chains organized as three dimers (R2).

It carries out the reaction carbamoyl phosphate + L-aspartate = N-carbamoyl-L-aspartate + phosphate + H(+). It participates in pyrimidine metabolism; UMP biosynthesis via de novo pathway; (S)-dihydroorotate from bicarbonate: step 2/3. Catalyzes the condensation of carbamoyl phosphate and aspartate to form carbamoyl aspartate and inorganic phosphate, the committed step in the de novo pyrimidine nucleotide biosynthesis pathway. The chain is Aspartate carbamoyltransferase catalytic subunit from Bacillus mycoides (strain KBAB4) (Bacillus weihenstephanensis).